Consider the following 333-residue polypeptide: Holliday junction branch migration complex subunit RuvB (333 aa).

The interval methionine 1–tyrosine 181 is large ATPase domain (RuvB-L). ATP-binding positions include leucine 20, arginine 21, glycine 62, lysine 65, threonine 66, threonine 67, glutamate 128–phenylalanine 130, arginine 171, tyrosine 181, and arginine 218. Threonine 66 lines the Mg(2+) pocket. The segment at glutamine 182–aspartate 252 is small ATPAse domain (RuvB-S). Residues glutamine 255–histidine 333 form a head domain (RuvB-H) region. The DNA site is built by arginine 291, arginine 310, arginine 312, and arginine 315.

Belongs to the RuvB family. Homohexamer. Forms an RuvA(8)-RuvB(12)-Holliday junction (HJ) complex. HJ DNA is sandwiched between 2 RuvA tetramers; dsDNA enters through RuvA and exits via RuvB. An RuvB hexamer assembles on each DNA strand where it exits the tetramer. Each RuvB hexamer is contacted by two RuvA subunits (via domain III) on 2 adjacent RuvB subunits; this complex drives branch migration. In the full resolvosome a probable DNA-RuvA(4)-RuvB(12)-RuvC(2) complex forms which resolves the HJ.

The protein localises to the cytoplasm. It catalyses the reaction ATP + H2O = ADP + phosphate + H(+). Its function is as follows. The RuvA-RuvB-RuvC complex processes Holliday junction (HJ) DNA during genetic recombination and DNA repair, while the RuvA-RuvB complex plays an important role in the rescue of blocked DNA replication forks via replication fork reversal (RFR). RuvA specifically binds to HJ cruciform DNA, conferring on it an open structure. The RuvB hexamer acts as an ATP-dependent pump, pulling dsDNA into and through the RuvAB complex. RuvB forms 2 homohexamers on either side of HJ DNA bound by 1 or 2 RuvA tetramers; 4 subunits per hexamer contact DNA at a time. Coordinated motions by a converter formed by DNA-disengaged RuvB subunits stimulates ATP hydrolysis and nucleotide exchange. Immobilization of the converter enables RuvB to convert the ATP-contained energy into a lever motion, pulling 2 nucleotides of DNA out of the RuvA tetramer per ATP hydrolyzed, thus driving DNA branch migration. The RuvB motors rotate together with the DNA substrate, which together with the progressing nucleotide cycle form the mechanistic basis for DNA recombination by continuous HJ branch migration. Branch migration allows RuvC to scan DNA until it finds its consensus sequence, where it cleaves and resolves cruciform DNA. The protein is Holliday junction branch migration complex subunit RuvB of Streptococcus equi subsp. zooepidemicus (strain MGCS10565).